Consider the following 166-residue polypeptide: Monodehydroascorbate reductase, fruit isozyme (166 aa).

It belongs to the FAD-dependent oxidoreductase family. It depends on FAD as a cofactor. Post-translationally, the N-terminus is blocked.

It carries out the reaction 2 monodehydro-L-ascorbate radical + NADH + H(+) = 2 L-ascorbate + NAD(+). In terms of biological role, catalyzes the conversion of monodehydroascorbate to ascorbate, oxidizing NADH in the process. The polypeptide is Monodehydroascorbate reductase, fruit isozyme (Cucumis sativus (Cucumber)).